The following is a 261-amino-acid chain: MDSSAVITQISKEEARGPLRGKGDQKSAASQKPRSRGILHSLFCCVCRDDGEALPAHSGAPLLVEENGAIPKQTPVQYLLPEAKAQDSDKICVVIDLDETLVHSSFKPVNNADFIIPVEIDGVVHQVYVLKRPHVDEFLQRMGELFECVLFTASLAKYADPVADLLDKWGAFRARLFRESCVFHRGNYVKDLSRLGRDLRRVLILDNSPASYVFHPDNAVPVASWFDNMSDTELHDLLPFFEQLSRVDDVYSVLRQPRPGS.

Met-1 is subject to N-acetylmethionine. Residues 1 to 10 are compositionally biased toward polar residues; that stretch reads MDSSAVITQI. The tract at residues 1-33 is disordered; the sequence is MDSSAVITQISKEEARGPLRGKGDQKSAASQKP. The segment covering 11–25 has biased composition (basic and acidic residues); sequence SKEEARGPLRGKGDQ. In terms of domain architecture, FCP1 homology spans 86 to 244; sequence QDSDKICVVI…HDLLPFFEQL (159 aa). Catalysis depends on Asp-96, which acts as the 4-aspartylphosphate intermediate. Mg(2+) is bound by residues Asp-96, Asp-98, and Asn-207. The active-site Proton donor is the Asp-98.

As to quaternary structure, monomer. Interacts with GTF2F1. Interacts with REST. The cofactor is Mg(2+). Expression is restricted to non-neuronal tissues. Highest expression in skeletal muscle, spleen, lung and placenta.

The protein resides in the nucleus. The catalysed reaction is O-phospho-L-seryl-[protein] + H2O = L-seryl-[protein] + phosphate. It carries out the reaction O-phospho-L-threonyl-[protein] + H2O = L-threonyl-[protein] + phosphate. With respect to regulation, stimulated by GTF2F1. Inhibited by beryllofluoride anions. In terms of biological role, preferentially catalyzes the dephosphorylation of 'Ser-5' within the tandem 7 residue repeats in the C-terminal domain (CTD) of the largest RNA polymerase II subunit POLR2A. Negatively regulates RNA polymerase II transcription, possibly by controlling the transition from initiation/capping to processive transcript elongation. Recruited by REST to neuronal genes that contain RE-1 elements, leading to neuronal gene silencing in non-neuronal cells. The sequence is that of Carboxy-terminal domain RNA polymerase II polypeptide A small phosphatase 1 (CTDSP1) from Homo sapiens (Human).